The chain runs to 134 residues: Small ribosomal subunit protein bS6 (134 aa).

Residues 100–134 are disordered; that stretch reads SFLARDETDRRERSEETAEGEGEPDHSANEAVVTA. Residues 103-115 are compositionally biased toward basic and acidic residues; the sequence is ARDETDRRERSEE.

The protein belongs to the bacterial ribosomal protein bS6 family.

In terms of biological role, binds together with bS18 to 16S ribosomal RNA. The sequence is that of Small ribosomal subunit protein bS6 from Acidithiobacillus ferrooxidans (strain ATCC 23270 / DSM 14882 / CIP 104768 / NCIMB 8455) (Ferrobacillus ferrooxidans (strain ATCC 23270)).